A 197-amino-acid chain; its full sequence is MKPFTIHRGKTAGIDRANIDTDQIIPKQFLKRIERTGFGQFLFYDWRYLSDGTPNPEFELNRPENEGATILVADENFGCGSSREHAPWALQDYGFRVIIAPSFADIFYNNCLKNGLLPIRLDKEDVRYLLRQSERADYELTVSLEEQRVFDDEGFSRPFDIDPYRKQLLLKGWDEIDLTFVYEAHIAAYERRHCPRP.

It belongs to the LeuD family. LeuD type 1 subfamily. Heterodimer of LeuC and LeuD.

It catalyses the reaction (2R,3S)-3-isopropylmalate = (2S)-2-isopropylmalate. It participates in amino-acid biosynthesis; L-leucine biosynthesis; L-leucine from 3-methyl-2-oxobutanoate: step 2/4. Its function is as follows. Catalyzes the isomerization between 2-isopropylmalate and 3-isopropylmalate, via the formation of 2-isopropylmaleate. The protein is 3-isopropylmalate dehydratase small subunit of Geobacillus kaustophilus (strain HTA426).